A 439-amino-acid chain; its full sequence is Arginine biosynthesis bifunctional protein ArgJ, mitochondrial (439 aa).

Substrate-binding residues include Thr175, Lys201, Thr212, Glu301, Asn434, and Ser439. Thr212 functions as the Nucleophile in the catalytic mechanism.

Belongs to the ArgJ family. In terms of assembly, heterodimer of an alpha and a beta chain. The alpha and beta chains are autoproteolytically processed from a single precursor protein within the mitochondrion.

The protein resides in the mitochondrion matrix. The enzyme catalyses N(2)-acetyl-L-ornithine + L-glutamate = N-acetyl-L-glutamate + L-ornithine. It catalyses the reaction L-glutamate + acetyl-CoA = N-acetyl-L-glutamate + CoA + H(+). Its pathway is amino-acid biosynthesis; L-arginine biosynthesis; L-ornithine and N-acetyl-L-glutamate from L-glutamate and N(2)-acetyl-L-ornithine (cyclic): step 1/1. It functions in the pathway amino-acid biosynthesis; L-arginine biosynthesis; N(2)-acetyl-L-ornithine from L-glutamate: step 1/4. Catalyzes two activities which are involved in the cyclic version of arginine biosynthesis: the synthesis of acetylglutamate from glutamate and acetyl-CoA, and of ornithine by transacetylation between acetylornithine and glutamate. The protein is Arginine biosynthesis bifunctional protein ArgJ, mitochondrial (ECM42) of Candida albicans (strain SC5314 / ATCC MYA-2876) (Yeast).